Consider the following 440-residue polypeptide: Gamma-aminobutyric acid receptor subunit pi (440 aa).

A signal peptide spans 1–23 (MKRSLHLTFVCLSLFSARMCVQG). The Extracellular portion of the chain corresponds to 24–241 (NQFNIEVSRS…LVLQFELQRN (218 aa)). Asparagine 43, asparagine 102, and asparagine 145 each carry an N-linked (GlcNAc...) asparagine glycan. An intrachain disulfide couples cysteine 160 to cysteine 174. N-linked (GlcNAc...) asparagine glycans are attached at residues asparagine 196 and asparagine 228. A helical transmembrane segment spans residues 242-262 (VLYFILETYVPSTFLVVLSWV). Over 263–270 (SFWISLDS) the chain is Cytoplasmic. The chain crosses the membrane as a helical span at residues 271–290 (VPARTCIGVTTVLSMTTLMI). Over 291–301 (GSRTSLPNTNC) the chain is Extracellular. A helical membrane pass occupies residues 302–322 (FIKAIDVYLGICFSFVFGALL). Topologically, residues 323–419 (EYAVAHYSSL…NPSNVDRYSK (97 aa)) are cytoplasmic. The chain crosses the membrane as a helical span at residues 420–440 (LLFPLIFMLANVFYWAYYMYF).

The protein belongs to the ligand-gated ion channel (TC 1.A.9) family. Gamma-aminobutyric acid receptor (TC 1.A.9.5) subfamily. GABRP sub-subfamily. Heteropentamer, formed by a combination of alpha (GABRA1-6), beta (GABRB1-3), gamma (GABRG1-3), delta (GABRD), epsilon (GABRE), rho (GABRR1-3), pi (GABRP) and theta (GABRQ) chains, each subunit exhibiting distinct physiological and pharmacological properties.

It localises to the cell membrane. It is found in the apical cell membrane. The enzyme catalyses chloride(in) = chloride(out). Pi subunit of the heteropentameric ligand-gated chloride channel gated by gamma-aminobutyric acid (GABA). GABA-gated chloride channels, also named GABA(A) receptors (GABAAR), consist of five subunits arranged around a central pore and contain GABA active binding site(s) located at the alpha and beta subunit interfaces. When activated by GABA, GABAARs selectively allow the flow of chloride anions across the cell membrane down their electrochemical gradient. Pi-containing GABAARs are mostly located in peripheral tissues. In the uterus, pi subunits modulate uterus contraction by altering the sensitivity of GABAARs to pregnanolone. In the lungs, pi-containing GABAARs contribute to pulmonary fluid transport via luminal secretion of chloride. This is Gamma-aminobutyric acid receptor subunit pi (GABRP) from Bos taurus (Bovine).